A 341-amino-acid polypeptide reads, in one-letter code: 2-acylglycerol O-acyltransferase 3 (341 aa).

2 consecutive transmembrane segments (helical) span residues 29-49 (YVLT…VLLF) and 50-70 (TSLW…WDTP). The N-linked (GlcNAc...) asparagine glycan is linked to Asn-126. A helical membrane pass occupies residues 137-157 (LFPGLRPWLAVLAGLFYLPVY).

Belongs to the diacylglycerol acyltransferase family. Ubiquitinated. Ubiquitination leads to proteasomal degradation. In terms of tissue distribution, selectively expressed in the digestive system. Highly expressed in the ileum, and at lower level in jejunum, duodenum, colon, cecum and the rectum. Not expressed in the stomach and the esophagus and trachea. Expressed at very low level in liver.

Its subcellular location is the endoplasmic reticulum membrane. It localises to the cytoplasm. It is found in the perinuclear region. The enzyme catalyses a 2-acylglycerol + an acyl-CoA = a 1,2-diacylglycerol + CoA. It carries out the reaction an acyl-CoA + a 1,2-diacyl-sn-glycerol = a triacyl-sn-glycerol + CoA. The catalysed reaction is 2-(9Z-octadecenoyl)-glycerol + (9Z)-octadecenoyl-CoA = 1,2-di-(9Z-octadecenoyl)-sn-glycerol + CoA. It catalyses the reaction 2-(9Z-octadecenoyl)-glycerol + hexadecanoyl-CoA = 1-hexadecanoyl-2-(9Z-octadecenoyl)-sn-glycerol + CoA. The enzyme catalyses 1,2-di-(9Z-octadecenoyl)-sn-glycerol + (9Z)-octadecenoyl-CoA = 1,2,3-tri-(9Z-octadecenoyl)-glycerol + CoA. It carries out the reaction 1-hexadecanoyl-2-(9Z-octadecenoyl)-sn-glycerol + hexadecanoyl-CoA = 1,3-dihexadecanoyl-2-(9Z-octadecenoyl)glycerol + CoA. The catalysed reaction is all-trans-retinol + hexadecanoyl-CoA = all-trans-retinyl hexadecanoate + CoA. It catalyses the reaction 1-O-(9Z-octadecenyl)-glycerol + (9Z)-octadecenoyl-CoA = 1-O-(9Z-octadecyl)-3-(9Z-octadecenoyl)-glycerol + CoA. The enzyme catalyses 1-O-(9Z-octadecyl)-3-(9Z-octadecenoyl)-glycerol + (9Z)-octadecenoyl-CoA = 1-O-(9Z-octadecenyl)-2,3-di-(9Z-octadecenoyl)glycerol + CoA. It functions in the pathway glycerolipid metabolism; triacylglycerol biosynthesis. Catalyzes the formation of diacylglycerol from 2-monoacylglycerol and fatty acyl-CoA. Also able to catalyze the terminal step in triacylglycerol synthesis by using diacylglycerol and fatty acyl-CoA as substrates. Has a preference toward palmitoyl-CoA and oleoyl-CoA. May be involved in absorption of dietary fat in the small intestine by catalyzing the resynthesis of triacylglycerol in enterocytes. Also able to use 1-monoalkylglycerol (1-MAkG) as an acyl acceptor for the synthesis of monoalkyl-monoacylglycerol (MAMAG). The protein is 2-acylglycerol O-acyltransferase 3 of Homo sapiens (Human).